Reading from the N-terminus, the 31-residue chain is Photosystem II reaction center protein T (31 aa).

The chain crosses the membrane as a helical span at residues 3–23 (SFAYILILAFSIGTLFFAIAL).

Belongs to the PsbT family. As to quaternary structure, PSII is composed of 1 copy each of membrane proteins PsbA, PsbB, PsbC, PsbD, PsbE, PsbF, PsbH, PsbI, PsbJ, PsbK, PsbL, PsbM, PsbT, PsbX, PsbY, PsbZ, Psb30/Ycf12, peripheral proteins PsbO, CyanoQ (PsbQ), PsbU, PsbV and a large number of cofactors. It forms dimeric complexes.

It localises to the cellular thylakoid membrane. Functionally, found at the monomer-monomer interface of the photosystem II (PS II) dimer, plays a role in assembly and dimerization of PSII. PSII is a light-driven water plastoquinone oxidoreductase, using light energy to abstract electrons from H(2)O, generating a proton gradient subsequently used for ATP formation. The sequence is that of Photosystem II reaction center protein T from Synechococcus sp. (strain RCC307).